The chain runs to 109 residues: Large ribosomal subunit protein uL22 (109 aa).

It belongs to the universal ribosomal protein uL22 family. Part of the 50S ribosomal subunit.

In terms of biological role, this protein binds specifically to 23S rRNA; its binding is stimulated by other ribosomal proteins, e.g. L4, L17, and L20. It is important during the early stages of 50S assembly. It makes multiple contacts with different domains of the 23S rRNA in the assembled 50S subunit and ribosome. Its function is as follows. The globular domain of the protein is located near the polypeptide exit tunnel on the outside of the subunit, while an extended beta-hairpin is found that lines the wall of the exit tunnel in the center of the 70S ribosome. This chain is Large ribosomal subunit protein uL22, found in Cupriavidus metallidurans (strain ATCC 43123 / DSM 2839 / NBRC 102507 / CH34) (Ralstonia metallidurans).